The sequence spans 623 residues: Glucokinase regulatory protein (623 aa).

SIS domains lie at 90 to 286 and 320 to 476; these read VQEV…QGVV and VGIS…VQKF. Beta-D-fructose 1-phosphate-binding positions include 109 to 110, Glu153, and 179 to 181; these read TS and SVG. 109-110 provides a ligand contact to beta-D-fructose 6-phosphate; sequence TS. Beta-D-fructose 6-phosphate is bound at residue 179–181; it reads SVG. The tract at residues 199–200 is important for interaction with GCK; that stretch reads AV. Glu348 serves as a coordination point for beta-D-fructose 1-phosphate. Residues 463–465 form an essential for interaction with GCK region; the sequence is LLF.

The protein belongs to the GCKR family. As to quaternary structure, interacts (fructose 6-phosphate bound form) with GCK.

It localises to the cytoplasm. Its subcellular location is the nucleus. The protein resides in the mitochondrion. Regulates glucokinase (GCK) by forming an inactive complex with this enzyme. Acts by promoting GCK recruitment to the nucleus, possibly to provide a reserve of GCK that can be quickly released in the cytoplasm after a meal. The affinity of GCKR for GCK is modulated by fructose metabolites: GCKR with bound fructose 6-phosphate has increased affinity for GCK, while GCKR with bound fructose 1-phosphate has strongly decreased affinity for GCK and does not inhibit GCK activity. The polypeptide is Glucokinase regulatory protein (Mus musculus (Mouse)).